The following is a 156-amino-acid chain: Ribosomal RNA large subunit methyltransferase H (156 aa).

S-adenosyl-L-methionine is bound by residues L73, G104, and 123-128 (ISSMTL).

This sequence belongs to the RNA methyltransferase RlmH family. In terms of assembly, homodimer.

The protein localises to the cytoplasm. The catalysed reaction is pseudouridine(1915) in 23S rRNA + S-adenosyl-L-methionine = N(3)-methylpseudouridine(1915) in 23S rRNA + S-adenosyl-L-homocysteine + H(+). Specifically methylates the pseudouridine at position 1915 (m3Psi1915) in 23S rRNA. This chain is Ribosomal RNA large subunit methyltransferase H, found in Burkholderia ambifaria (strain ATCC BAA-244 / DSM 16087 / CCUG 44356 / LMG 19182 / AMMD) (Burkholderia cepacia (strain AMMD)).